The following is a 3415-amino-acid chain: Genome polyprotein (3415 aa).

A disordered region spans residues 1 to 29 (MMTTSKGKGGGPPRRKLKVTANKSRPATS). At 1-96 (MMTTSKGKGG…LHMRGRRRSG (96 aa)) the chain is on the cytoplasmic side. Residues 95–115 (SGVDWTWIFLTMALMTMAMAT) constitute a propeptide, ER anchor for the capsid protein C, removed in mature form by serine protease NS3. A helical transmembrane segment spans residues 97–117 (VDWTWIFLTMALMTMAMATTI). The Extracellular segment spans residues 118–243 (HRDREGYMVM…RVEGWMWKNK (126 aa)). N-linked (GlcNAc...) asparagine; by host glycosylation occurs at Asn142. A helical transmembrane segment spans residues 244-260 (LLTAAIVALAWLMVDSW). Met261 is a topological domain (cytoplasmic). Residues 262–278 (ARVTVILLALSLGPVYA) form a helical membrane-spanning segment. The Extracellular segment spans residues 279 to 726 (TRCTHLENRD…HTVLGGAFNT (448 aa)). Cystine bridges form between Cys281–Cys308, Cys338–Cys394, Cys338–Cys399, Cys352–Cys383, Cys370–Cys394, and Cys370–Cys399. The tract at residues 376–389 (DRGWGNHCGFFGKG) is fusion peptide. N-linked (GlcNAc...) asparagine; by host glycosylation occurs at Asn432. Disulfide bonds link Cys464/Cys568 and Cys585/Cys617. Residues 727-747 (LFGGVGFIPKMLLGVALVWLG) traverse the membrane as a helical segment. The Cytoplasmic segment spans residues 748-754 (LNARNPT). A helical membrane pass occupies residues 755-775 (MSMTFLAVGALTLMMTMGVGA). Topologically, residues 776 to 1187 (DYGCAIDPER…LVRVEEIVRY (412 aa)) are extracellular. Disulfide bonds link Cys779/Cys790, Cys830/Cys920, Cys955/Cys1000, Cys1057/Cys1106, Cys1068/Cys1090, and Cys1089/Cys1093. Residues Asn860, Asn983, and Asn999 are each glycosylated (N-linked (GlcNAc...) asparagine; by host). The helical transmembrane segment at 1188-1208 (VIAVGVTFHLELGPETMVLVM) threads the bilayer. The Cytoplasmic segment spans residues 1209–1233 (LQAVFNMRTCYLMGFLVKRVITTRE). Residues 1234–1253 (VVTVYFLLLVLEMGIPEMNF) form a helical membrane-spanning segment. Gly1254 is a topological domain (lumenal). The helical transmembrane segment at 1255–1275 (HLWEWADALAMGLLIIKASAM) threads the bilayer. Residues 1276 to 1292 (EDRRGLGFLLAGLMTQR) are Cytoplasmic-facing. The helical transmembrane segment at 1293–1313 (HLVAVHHGLMVFLTVALAVVG) threads the bilayer. The Lumenal portion of the chain corresponds to 1314 to 1327 (RNIYNGQKERKGLC). The helical transmembrane segment at 1328–1348 (FTVPLASLLGGSGSGLRMLAL) threads the bilayer. Residues 1349-1359 (WECLGGRGRRS) lie on the Cytoplasmic side of the membrane. Residues 1360-1378 (LSEPLTVVGVMLAMASGLL) form a helical membrane-spanning segment. Residues 1379 to 1382 (RHSS) are Lumenal-facing. The chain crosses the membrane as a helical span at residues 1383 to 1403 (QEALLALSAGSFLILMLILGT). Over 1404-1452 (RRLQLTAEWAGVVEWNPELVNEGGEVSLKVRQDAMGNLHLTEVEREERR) the chain is Cytoplasmic. Residues 1410-1449 (AEWAGVVEWNPELVNEGGEVSLKVRQDAMGNLHLTEVERE) are interacts with and activates NS3 protease. An intramembrane region (helical) is located at residues 1453–1473 (LALWLVFGLLASAYHWSGILV). Over 1474 to 2163 (TMGAWTVYEL…AERDAPEAML (690 aa)) the chain is Cytoplasmic. Residues 1490–1669 (TDLVFSGQLP…NVEKSRPEMP (180 aa)) form the Peptidase S7 domain. Catalysis depends on charge relay system; for serine protease NS3 activity residues His1543, Asp1567, and Ser1627. Residues 1675 to 1832 (GKWTSKGSIT…ESKGAIVSEE (158 aa)) form the Helicase ATP-binding domain. Residue 1688 to 1695 (MHPGSGKT) participates in ATP binding. Residues 1780–1783 (DEAH) carry the DEAH box motif. Positions 1842–2001 (DGFDWITEFE…TVRGPVATFY (160 aa)) constitute a Helicase C-terminal domain. At Lys1884 the chain carries N6-acetyllysine; by host. Residues 2164 to 2184 (TLLEVAVLGIATLGVVWCFIV) traverse the membrane as a helical segment. Residues 2185 to 2190 (RTSVSR) are Lumenal-facing. The segment at residues 2191-2210 (MVLGTLVLAVALILLWLGGM) is an intramembrane region (helical). Asp2211 is a topological domain (lumenal). The helical transmembrane segment at 2212–2232 (YGTMAGVALIFYLLLTVLQPE) threads the bilayer. Topologically, residues 2233-2243 (PGKQRSGEDNR) are cytoplasmic. The helical transmembrane segment at 2244–2264 (LAFLLIGLGSVVGLVAANELG) threads the bilayer. The Lumenal portion of the chain corresponds to 2265-2300 (YLEQTKTDISGLFRREDQGGMVWDAWTNIDIQPARS). Residues 2301-2321 (WGTYVLIVSLFTPYMLHQLQT) constitute an intramembrane region (helical). Residues 2322–2344 (KIQRLVNSSVAAGTQAMRDLGGG) lie on the Lumenal side of the membrane. Residues 2345-2365 (TPFFGVAGHVVALGVTSLVGA) constitute an intramembrane region (helical). Residues 2366–2369 (TPTS) are Lumenal-facing. Residues 2370–2390 (LALGVALAALHLAVVTSGLEA) form a helical membrane-spanning segment. Over 2391 to 2433 (ELTQRAHRAFFSAMVKNPMVDGEIINPIPDGDPKPALYERKMS) the chain is Cytoplasmic. The helical transmembrane segment at 2434-2454 (LFLAIGLCIAAVALNRTAAAM) threads the bilayer. Topologically, residues 2455-2479 (TEAGAVAVAALGQLLRPEEESWWTM) are lumenal. A helical membrane pass occupies residues 2480 to 2500 (PMACGMAGLVRGSLWGLLPVL). Residues 2501–3415 (HRIWLRTQGA…WELKLESSII (915 aa)) lie on the Cytoplasmic side of the membrane. In terms of domain architecture, mRNA cap 0-1 NS5-type MT spans 2513 to 2777 (GGAEGSTLGD…EIDLGTGTRC (265 aa)). Ser2568 provides a ligand contact to S-adenosyl-L-methionine. Ser2568 is modified (phosphoserine). The active-site For 2'-O-MTase activity is Lys2573. Positions 2598, 2599, 2616, 2617, 2643, and 2644 each coordinate S-adenosyl-L-methionine. The active-site For 2'-O-MTase activity is Asp2658. Ile2659 is an S-adenosyl-L-methionine binding site. Catalysis depends on for 2'-O-MTase activity residues Lys2695 and Glu2731. The interaction with host SCRIB stretch occupies residues 2731 to 2735 (EMYYS). Tyr2733 serves as a coordination point for S-adenosyl-L-methionine. 4 residues coordinate Zn(2+): Glu2951, His2955, Cys2960, and Cys2963. One can recognise a RdRp catalytic domain in the interval 3041–3190 (GKLYADDTAG…KPIDDRFGKA (150 aa)). Zn(2+) contacts are provided by His3225, Cys3241, and Cys3360.

It in the N-terminal section; belongs to the class I-like SAM-binding methyltransferase superfamily. mRNA cap 0-1 NS5-type methyltransferase family. As to quaternary structure, homodimer. Interacts (via N-terminus) with host EXOC1 (via C-terminus); this interaction results in EXOC1 degradation through the proteasome degradation pathway. Forms heterodimers with envelope protein E in the endoplasmic reticulum and Golgi. In terms of assembly, homodimer; in the endoplasmic reticulum and Golgi. As to quaternary structure, forms homodimers as well as homohexamers. NS1 may interact with NS4A. Forms a heterodimer with serine protease NS3. May form homooligomers. In terms of assembly, forms a heterodimer with NS2B. Interacts with NS4B. Interacts with unphosphorylated RNA-directed RNA polymerase NS5; this interaction stimulates RNA-directed RNA polymerase NS5 guanylyltransferase activity. As to quaternary structure, interacts with serine protease NS3. Interacts with host STAT2; this interaction inhibits the phosphorylation of the latter, and, when all viral proteins are present (polyprotein), targets STAT2 for degradation. Specific enzymatic cleavages in vivo yield mature proteins. Cleavages in the lumen of endoplasmic reticulum are performed by host signal peptidase, whereas cleavages in the cytoplasmic side are performed by serine protease NS3. Signal cleavage at the 2K-4B site requires a prior NS3 protease-mediated cleavage at the 4A-2K site. In terms of processing, cleaved in post-Golgi vesicles by a host furin, releasing the mature small envelope protein M, and peptide pr. This cleavage is incomplete as up to 30% of viral particles still carry uncleaved prM. Post-translationally, N-glycosylated. N-glycosylated. The excreted form is glycosylated and this is required for efficient secretion of the protein from infected cells. In terms of processing, acetylated by host KAT5. Acetylation modulates NS3 RNA-binding and unwinding activities and plays an important positive role for viral replication. Post-translationally, phosphorylated on serines residues. This phosphorylation may trigger NS5 nuclear localization.

The protein localises to the virion. The protein resides in the host nucleus. It localises to the host cytoplasm. It is found in the host perinuclear region. Its subcellular location is the secreted. The protein localises to the virion membrane. The protein resides in the host endoplasmic reticulum membrane. The enzyme catalyses Selective hydrolysis of -Xaa-Xaa-|-Yaa- bonds in which each of the Xaa can be either Arg or Lys and Yaa can be either Ser or Ala.. It catalyses the reaction RNA(n) + a ribonucleoside 5'-triphosphate = RNA(n+1) + diphosphate. The catalysed reaction is a ribonucleoside 5'-triphosphate + H2O = a ribonucleoside 5'-diphosphate + phosphate + H(+). It carries out the reaction ATP + H2O = ADP + phosphate + H(+). The enzyme catalyses a 5'-end (5'-triphosphoguanosine)-ribonucleoside in mRNA + S-adenosyl-L-methionine = a 5'-end (N(7)-methyl 5'-triphosphoguanosine)-ribonucleoside in mRNA + S-adenosyl-L-homocysteine. It catalyses the reaction a 5'-end (N(7)-methyl 5'-triphosphoguanosine)-ribonucleoside in mRNA + S-adenosyl-L-methionine = a 5'-end (N(7)-methyl 5'-triphosphoguanosine)-(2'-O-methyl-ribonucleoside) in mRNA + S-adenosyl-L-homocysteine + H(+). In terms of biological role, plays a role in virus budding by binding to the cell membrane and gathering the viral RNA into a nucleocapsid that forms the core of a mature virus particle. During virus entry, may induce genome penetration into the host cytoplasm after hemifusion induced by the surface proteins. Can migrate to the cell nucleus where it modulates host functions. Its function is as follows. Inhibits RNA silencing by interfering with host Dicer. Functionally, prevents premature fusion activity of envelope proteins in trans-Golgi by binding to envelope protein E at pH6.0. After virion release in extracellular space, gets dissociated from E dimers. Acts as a chaperone for envelope protein E during intracellular virion assembly by masking and inactivating envelope protein E fusion peptide. prM is the only viral peptide matured by host furin in the trans-Golgi network probably to avoid catastrophic activation of the viral fusion activity in acidic Golgi compartment prior to virion release. prM-E cleavage is inefficient, and many virions are only partially matured. These uncleaved prM would play a role in immune evasion. In terms of biological role, may play a role in virus budding. Exerts cytotoxic effects by activating a mitochondrial apoptotic pathway through M ectodomain. May display a viroporin activity. Its function is as follows. Binds to host cell surface receptor and mediates fusion between viral and cellular membranes. Envelope protein is synthesized in the endoplasmic reticulum in the form of heterodimer with protein prM. They play a role in virion budding in the ER, and the newly formed immature particle is covered with 60 spikes composed of heterodimer between precursor prM and envelope protein E. The virion is transported to the Golgi apparatus where the low pH causes dissociation of PrM-E heterodimers and formation of E homodimers. prM-E cleavage is inefficient, and many virions are only partially matured. These uncleaved prM would play a role in immune evasion. Functionally, involved in immune evasion, pathogenesis and viral replication. Once cleaved off the polyprotein, is targeted to three destinations: the viral replication cycle, the plasma membrane and the extracellular compartment. Essential for viral replication. Required for formation of the replication complex and recruitment of other non-structural proteins to the ER-derived membrane structures. Excreted as a hexameric lipoparticle that plays a role against host immune response. Antagonizing the complement function. Binds to the host macrophages and dendritic cells. Inhibits signal transduction originating from Toll-like receptor 3 (TLR3). Component of the viral RNA replication complex that functions in virion assembly and antagonizes the host immune response. In terms of biological role, required cofactor for the serine protease function of NS3. May have membrane-destabilizing activity and form viroporins. Its function is as follows. Displays three enzymatic activities: serine protease, NTPase and RNA helicase. NS3 serine protease, in association with NS2B, performs its autocleavage and cleaves the polyprotein at dibasic sites in the cytoplasm: C-prM, NS2A-NS2B, NS2B-NS3, NS3-NS4A, NS4A-2K and NS4B-NS5. NS3 RNA helicase binds RNA and unwinds dsRNA in the 3' to 5' direction. Functionally, regulates the ATPase activity of the NS3 helicase activity. NS4A allows NS3 helicase to conserve energy during unwinding. Functions as a signal peptide for NS4B and is required for the interferon antagonism activity of the latter. In terms of biological role, induces the formation of ER-derived membrane vesicles where the viral replication takes place. Inhibits interferon (IFN)-induced host STAT1 phosphorylation and nuclear translocation, thereby preventing the establishment of cellular antiviral state by blocking the IFN-alpha/beta pathway. Inhibits STAT2 translocation in the nucleus after IFN-alpha treatment. Its function is as follows. Replicates the viral (+) and (-) RNA genome, and performs the capping of genomes in the cytoplasm. NS5 methylates viral RNA cap at guanine N-7 and ribose 2'-O positions. Besides its role in RNA genome replication, also prevents the establishment of cellular antiviral state by blocking the interferon-alpha/beta (IFN-alpha/beta) signaling pathway. Inhibits host TYK2 and STAT2 phosphorylation, thereby preventing activation of JAK-STAT signaling pathway. The sequence is that of Genome polyprotein from Tick-borne powassan virus (strain LB) (POWV).